The following is a 71-amino-acid chain: Pro-MCH (71 aa).

The signal sequence occupies residues 1-20 (AKMSLSSYILILTLVLFSQG).

This sequence belongs to the melanin-concentrating hormone family.

Its subcellular location is the secreted. The polypeptide is Pro-MCH (PMCH) (Carlito syrichta (Philippine tarsier)).